A 265-amino-acid polypeptide reads, in one-letter code: Glutamate racemase (265 aa).

Residues 9–10 (DS) and 41–42 (YS) each bind substrate. C73 serves as the catalytic Proton donor/acceptor. A substrate-binding site is contributed by 74–75 (NT). The active-site Proton donor/acceptor is C184. 185-186 (TH) contributes to the substrate binding site.

The protein belongs to the aspartate/glutamate racemases family.

The catalysed reaction is L-glutamate = D-glutamate. The protein operates within cell wall biogenesis; peptidoglycan biosynthesis. Its function is as follows. Provides the (R)-glutamate required for cell wall biosynthesis. The chain is Glutamate racemase from Actinobacillus pleuropneumoniae serotype 5b (strain L20).